A 340-amino-acid chain; its full sequence is Nesprin-4 (340 aa).

Disordered regions lie at residues 1-86 (MAQF…DGGK) and 254-277 (HRRR…DAML). Residues 1–291 (MAQFPLLGHG…GVPAPASRRP (291 aa)) lie on the Cytoplasmic side of the membrane. The segment covering 53–63 (APEHFMDEPKS) has biased composition (basic and acidic residues). A KASH domain is found at 283 to 340 (VPAPASRRPLTFLLLLLFLLLVGATLLLPLSGVPCCSHTRLARTPYLVLSYVNGLPPI). The chain crosses the membrane as a helical; Anchor for type IV membrane protein span at residues 292-312 (LTFLLLLLFLLLVGATLLLPL). Residues 313–340 (SGVPCCSHTRLARTPYLVLSYVNGLPPI) are Perinuclear space-facing.

This sequence belongs to the nesprin family. In terms of assembly, core component of LINC complexes which are composed of inner nuclear membrane SUN domain-containing proteins coupled to outer nuclear membrane KASH domain-containing nesprins. SUN and KASH domain-containing proteins seem to bind each other promiscuously; however, differentially expression of LINC complex constituents can give rise to specific assemblies. Probably part of a SUN1-containing LINC complex. Interacts with kinesins KIF5B and KLC1.

The protein resides in the nucleus outer membrane. Functionally, as a component of the LINC (LInker of Nucleoskeleton and Cytoskeleton) complex, involved in the connection between the nuclear lamina and the cytoskeleton. The nucleocytoplasmic interactions established by the LINC complex play an important role in the transmission of mechanical forces across the nuclear envelope and in nuclear movement and positioning. Behaves as a kinesin cargo, providing a functional binding site for kinesin-1 at the nuclear envelope. Hence may contribute to the establishment of secretory epithelial morphology, by promoting kinesin-dependent apical migration of the centrosome and Golgi apparatus and basal localization of the nucleus. This Rattus norvegicus (Rat) protein is Nesprin-4 (Syne4).